A 594-amino-acid chain; its full sequence is U3 small nucleolar RNA-associated protein 18 (594 aa).

Disordered regions lie at residues Glu48–Ser128 and Lys176–Val200. Composition is skewed to acidic residues over residues Gln49–Gln72, Thr102–Ser128, and Asp180–Gly196. The interaction with UTP21 stretch occupies residues Asp101–Glu190. A phosphoserine mark is found at Ser182 and Ser184. 5 WD repeats span residues Pro246–Val285, Leu290–Ser334, Gly463–Thr504, Gln513–Asn554, and Thr560–His593.

Belongs to the WD repeat UTP18 family. In terms of assembly, interacts with snoRNA U3. Interacts with MPP10, UTP21 and UTP25. Component of the ribosomal small subunit (SSU) processome composed of at least 40 protein subunits and snoRNA U3.

The protein resides in the nucleus. It localises to the nucleolus. Involved in nucleolar processing of pre-18S ribosomal RNA and ribosome assembly. The polypeptide is U3 small nucleolar RNA-associated protein 18 (UTP18) (Saccharomyces cerevisiae (strain ATCC 204508 / S288c) (Baker's yeast)).